Consider the following 127-residue polypeptide: Fluoride-specific ion channel FluC (127 aa).

The next 4 membrane-spanning stretches (helical) occupy residues 4–24 (LLLA…MLSM), 35–55 (LGTL…FAWF), 71–91 (TGFC…VFLL), and 103–123 (VLVN…IFSA). Na(+) is bound by residues G75 and T78.

The protein belongs to the fluoride channel Fluc/FEX (TC 1.A.43) family.

Its subcellular location is the cell inner membrane. It carries out the reaction fluoride(in) = fluoride(out). Its activity is regulated as follows. Na(+) is not transported, but it plays an essential structural role and its presence is essential for fluoride channel function. Functionally, fluoride-specific ion channel. Important for reducing fluoride concentration in the cell, thus reducing its toxicity. The protein is Fluoride-specific ion channel FluC of Escherichia fergusonii (strain ATCC 35469 / DSM 13698 / CCUG 18766 / IAM 14443 / JCM 21226 / LMG 7866 / NBRC 102419 / NCTC 12128 / CDC 0568-73).